Consider the following 94-residue polypeptide: Phosphoribosyl-ATP pyrophosphatase (94 aa).

Belongs to the PRA-PH family.

Its subcellular location is the cytoplasm. It carries out the reaction 1-(5-phospho-beta-D-ribosyl)-ATP + H2O = 1-(5-phospho-beta-D-ribosyl)-5'-AMP + diphosphate + H(+). It functions in the pathway amino-acid biosynthesis; L-histidine biosynthesis; L-histidine from 5-phospho-alpha-D-ribose 1-diphosphate: step 2/9. This is Phosphoribosyl-ATP pyrophosphatase from Saccharolobus islandicus (strain Y.N.15.51 / Yellowstone #2) (Sulfolobus islandicus).